Reading from the N-terminus, the 475-residue chain is DNA-binding protein D-ETS-6 (475 aa).

The tract at residues 42–150 (SIGSGNETKL…VSPVEVPVDP (109 aa)) is disordered. Low complexity predominate over residues 70-108 (SSSSTSDSSASSYSSTDSDSGSSTSSSSIRSQLPALNLP). Pro residues predominate over residues 109–121 (VPLPLATPTPPAV). Positions 122–144 (SSPHQAPSPRRNSSDSNRSVSPV) are enriched in low complexity. The PNT domain occupies 132–219 (RNSSDSNRSV…QHFAISLYHA (88 aa)). Residues 255–335 (IQLWQFLLEL…HGKRYAYKFD (81 aa)) constitute a DNA-binding region (ETS). The segment at 350–475 (GDPASSMLGS…PVTPTTNAFN (126 aa)) is disordered. Residues 375-388 (PPLHHHPQHSHPHH) show a composition bias toward basic residues. Low complexity predominate over residues 401-436 (SSPASNSSSLGFPSSSTASSQASPGQAPASSSASTS). The segment covering 453–475 (RTSTSSAGNYDQGPVTPTTNAFN) has biased composition (polar residues).

The protein belongs to the ETS family. In terms of tissue distribution, embryonic ventral nervous system and 1 pair of neurons in each thoracic segment.

The protein localises to the nucleus. The sequence is that of DNA-binding protein D-ETS-6 (Ets21C) from Drosophila melanogaster (Fruit fly).